We begin with the raw amino-acid sequence, 540 residues long: Phosphoenolpyruvate carboxykinase (ATP) (540 aa).

Arginine 65 lines the substrate pocket. N6-acetyllysine is present on lysine 87. Tyrosine 207 and lysine 213 together coordinate substrate. Residues lysine 213, histidine 232, and 248 to 256 each bind ATP; that span reads GLSGTGKTT. Mn(2+)-binding residues include lysine 213 and histidine 232. A Mn(2+)-binding site is contributed by aspartate 269. ATP is bound by residues glutamate 297, arginine 333, 449-450, and threonine 455; that span reads RI. Arginine 333 contributes to the substrate binding site. Lysine 523 carries the N6-acetyllysine modification.

The protein belongs to the phosphoenolpyruvate carboxykinase (ATP) family. In terms of assembly, monomer. Mn(2+) serves as cofactor.

The protein resides in the cytoplasm. The catalysed reaction is oxaloacetate + ATP = phosphoenolpyruvate + ADP + CO2. It participates in carbohydrate biosynthesis; gluconeogenesis. Its function is as follows. Involved in the gluconeogenesis. Catalyzes the conversion of oxaloacetate (OAA) to phosphoenolpyruvate (PEP) through direct phosphoryl transfer between the nucleoside triphosphate and OAA. The protein is Phosphoenolpyruvate carboxykinase (ATP) of Escherichia coli O157:H7.